The following is a 348-amino-acid chain: Heptaprenyl diphosphate synthase component 2 (348 aa).

Residues Lys73, Arg76, and His105 each coordinate isopentenyl diphosphate. Asp112 and Asp116 together coordinate Mg(2+). Arg121 contacts all-trans-hexaprenyl diphosphate. Residue Arg122 participates in isopentenyl diphosphate binding. Positions 198, 199, and 236 each coordinate all-trans-hexaprenyl diphosphate.

The protein belongs to the FPP/GGPP synthase family. In terms of assembly, heterodimer of component I and II. Requires Mg(2+) as cofactor.

The enzyme catalyses 4 isopentenyl diphosphate + (2E,6E)-farnesyl diphosphate = all-trans-heptaprenyl diphosphate + 4 diphosphate. Its function is as follows. Supplies heptaprenyl diphosphate, the precursor for the side chain of the isoprenoid quinone menaquinone-7 (MQ-7). This chain is Heptaprenyl diphosphate synthase component 2 (hepT), found in Bacillus subtilis (strain 168).